The following is a 252-amino-acid chain: N-acetylglucosaminyl-phosphatidylinositol de-N-acetylase (252 aa).

The chain crosses the membrane as a helical span at residues 2–22; the sequence is ELVGFLCVAVAVLTWGFLRVW. Residues 23 to 252 lie on the Cytoplasmic side of the membrane; the sequence is NSAERMRSPE…YMRINSLRFL (230 aa).

It belongs to the PIGL family.

The protein resides in the endoplasmic reticulum membrane. It carries out the reaction a 6-(N-acetyl-alpha-D-glucosaminyl)-1-(1,2-diacyl-sn-glycero-3-phospho)-1D-myo-inositol + H2O = a 6-(alpha-D-glucosaminyl)-1-(1,2-diacyl-sn-glycero-3-phospho)-1D-myo-inositol + acetate. It participates in glycolipid biosynthesis; glycosylphosphatidylinositol-anchor biosynthesis. In terms of biological role, catalyzes the second step of glycosylphosphatidylinositol (GPI) biosynthesis, which is the de-N-acetylation of N-acetylglucosaminyl-phosphatidylinositol. This is N-acetylglucosaminyl-phosphatidylinositol de-N-acetylase (Pigl) from Mus musculus (Mouse).